The chain runs to 449 residues: Gallate transporter (449 aa).

Transmembrane regions (helical) follow at residues 26-46 (WLILVLCFLIVLFDGFDVAVM), 62-82 (AAFGPVMSAGMVGLAIGALTA), 92-112 (KKVLLIAVSGFSLLSLACAFA), 123-143 (LLTGIALGAAMPNCTTLLAEY), 155-175 (IMFTGFNMGSGLGGFLSAWLI), 183-203 (VLLAGGLLPLALLPLLWWLLP), 262-282 (LALWLTYFMGLLVIYLTMGWL), 298-318 (TITGLFQIGGAVGAIVVGWIM), 326-346 (VIAIAYALGGLCIVSLGALSL), 349-369 (SLLVVGVAAAGFCMSGAQTAL), 388-408 (WMLGIGRFGAIFGSLIGGAVL), and 414-434 (LPLLFTLLGLPAFAAALAILA).

Belongs to the major facilitator superfamily. Sugar transporter (TC 2.A.1.1) family.

Its subcellular location is the membrane. In terms of biological role, transporter that specifically mediates the uptake of gallate. In Pseudomonas putida (Arthrobacter siderocapsulatus), this protein is Gallate transporter (galT).